The following is a 245-amino-acid chain: 1-(5-phosphoribosyl)-5-[(5-phosphoribosylamino)methylideneamino] imidazole-4-carboxamide isomerase (245 aa).

Asp-7 serves as the catalytic Proton acceptor. Asp-129 serves as the catalytic Proton donor.

Belongs to the HisA/HisF family.

Its subcellular location is the cytoplasm. The catalysed reaction is 1-(5-phospho-beta-D-ribosyl)-5-[(5-phospho-beta-D-ribosylamino)methylideneamino]imidazole-4-carboxamide = 5-[(5-phospho-1-deoxy-D-ribulos-1-ylimino)methylamino]-1-(5-phospho-beta-D-ribosyl)imidazole-4-carboxamide. Its pathway is amino-acid biosynthesis; L-histidine biosynthesis; L-histidine from 5-phospho-alpha-D-ribose 1-diphosphate: step 4/9. In Aliivibrio fischeri (strain ATCC 700601 / ES114) (Vibrio fischeri), this protein is 1-(5-phosphoribosyl)-5-[(5-phosphoribosylamino)methylideneamino] imidazole-4-carboxamide isomerase.